Consider the following 418-residue polypeptide: Voltage-gated ClC-type chloride channel ClcB (418 aa).

Transmembrane regions (helical) follow at residues 5–25 (LLIA…FRHA), 54–74 (LLTP…WQKF), 146–166 (LWIA…PLAG), 168–188 (LFIA…PVII), 222–242 (ALII…LTLM), 260–280 (LALG…VWGN), 291–311 (APPL…AVLA), 316–336 (GAPG…GMLY), 352–372 (LLLG…APIM), and 380–400 (MTGE…ASVI).

This sequence belongs to the chloride channel (TC 2.A.49) family. ClcB subfamily.

It localises to the cell inner membrane. Its function is as follows. Probably acts as an electrical shunt for an outwardly-directed proton pump that is linked to amino acid decarboxylation, as part of the extreme acid resistance (XAR) response. This chain is Voltage-gated ClC-type chloride channel ClcB, found in Escherichia coli O9:H4 (strain HS).